Reading from the N-terminus, the 984-residue chain is Glycine dehydrogenase (decarboxylating) (984 aa).

Lys-702 is modified (N6-(pyridoxal phosphate)lysine).

The protein belongs to the GcvP family. The glycine cleavage system is composed of four proteins: P, T, L and H. Requires pyridoxal 5'-phosphate as cofactor.

It catalyses the reaction N(6)-[(R)-lipoyl]-L-lysyl-[glycine-cleavage complex H protein] + glycine + H(+) = N(6)-[(R)-S(8)-aminomethyldihydrolipoyl]-L-lysyl-[glycine-cleavage complex H protein] + CO2. Its function is as follows. The glycine cleavage system catalyzes the degradation of glycine. The P protein binds the alpha-amino group of glycine through its pyridoxal phosphate cofactor; CO(2) is released and the remaining methylamine moiety is then transferred to the lipoamide cofactor of the H protein. In Xanthomonas oryzae pv. oryzae (strain MAFF 311018), this protein is Glycine dehydrogenase (decarboxylating).